The chain runs to 484 residues: DNA-binding protein (484 aa).

Positions 1–69 (MASNQHSQRE…ESAEEEEAEP (69 aa)) are disordered. The segment covering 51 to 60 (SMAAIPLSPE) has biased composition (low complexity). Phosphotyrosine; by host is present on Y150. Zn(2+) is bound by residues C239 and H241. The tract at residues 252-286 (VEMDVTSESGQRALKENPSKAKVAQNRWGRNVVQI) is flexible loop. Zn(2+) contacts are provided by C294, C310, C351, C353, C405, and C421. A C-terminal arm, DBP binding region spans residues 468 to 484 (ISLPTNHGDCREEPFDF).

It belongs to the adenoviridae E2A DNA-binding protein family. As to quaternary structure, homomultimerizes on viral ssDNA bound to pTP. Forms a initiation complex with viral polymerase, pTP and hosts NFIA and POU2F1/OCT1. Interacts with host SRCAP.

It localises to the host nucleus. Functionally, plays a role in the elongation phase of viral strand displacement replication by unwinding the template in an ATP-independent fashion, employing its capacity to form multimers. Also enhances the rate of initiation. Released from template upon second strand synthesis. Assembles in complex with viral pTP, viral pol, host NFIA and host POU2F1/OCT1 on viral origin of replication. Covers the whole ssDNA genome during synthesis. The complementary strand synthesis induces its relese from DNA template. May inhibit cellular transcription mediated by the interaction between host SRCAP and CBP. This chain is DNA-binding protein, found in Human adenovirus A serotype 12 (HAdV-12).